The sequence spans 283 residues: Protein BASIC PENTACYSTEINE5 (283 aa).

An alanine-zipper region spans residues 51-86 (AVKERNEAVAATKEALASRDEALEQRDKALSERDNA). Residues 63–89 (KEALASRDEALEQRDKALSERDNAIME) are a coiled coil. The interval 122-176 (EESHLPNPSPISTIPPEAANTRPTKRKKESKQGKKMGEDLNRPVASPGKKSRKDW) is disordered. Over residues 151–162 (SKQGKKMGEDLN) the composition is skewed to basic and acidic residues.

It belongs to the BBR/BPC family. As to quaternary structure, homodimer. Heterodimer. Expressed in seedlings, leaves and pistils.

The protein resides in the nucleus. Its function is as follows. Transcriptional regulator that specifically binds to GA-rich elements (GAGA-repeats) present in regulatory sequences of genes involved in developmental processes. The protein is Protein BASIC PENTACYSTEINE5 (BPC5) of Arabidopsis thaliana (Mouse-ear cress).